The following is a 212-amino-acid chain: Large ribosomal subunit protein uL3 (212 aa).

The residue at position 152 (Q152) is an N5-methylglutamine.

The protein belongs to the universal ribosomal protein uL3 family. Part of the 50S ribosomal subunit. Forms a cluster with proteins L14 and L19. Methylated by PrmB.

Its function is as follows. One of the primary rRNA binding proteins, it binds directly near the 3'-end of the 23S rRNA, where it nucleates assembly of the 50S subunit. The sequence is that of Large ribosomal subunit protein uL3 from Marinomonas sp. (strain MWYL1).